The chain runs to 215 residues: RNA pyrophosphohydrolase (215 aa).

Residues 6 to 149 (GFRPNVGIIL…KRDVYQLALT (144 aa)) enclose the Nudix hydrolase domain. Residues 38-59 (GGIKYGETPMQAMYRELHEETG) carry the Nudix box motif.

Belongs to the Nudix hydrolase family. RppH subfamily. A divalent metal cation is required as a cofactor.

Accelerates the degradation of transcripts by removing pyrophosphate from the 5'-end of triphosphorylated RNA, leading to a more labile monophosphorylated state that can stimulate subsequent ribonuclease cleavage. The protein is RNA pyrophosphohydrolase of Burkholderia vietnamiensis (strain G4 / LMG 22486) (Burkholderia cepacia (strain R1808)).